The chain runs to 148 residues: Male-specific protein scotti (148 aa).

The segment at 56–78 is disordered; it reads PQEPPLGVFPAQGGPNGPPRLRK. An N-linked (GlcNAc...) asparagine glycan is attached at asparagine 129.

This sequence belongs to the male-specific scotti family.

Post-meiotically transcribed gene that has a role in late spermiogenesis; required for actin cone progression during spermatid individualization. The polypeptide is Male-specific protein scotti (Drosophila sechellia (Fruit fly)).